Reading from the N-terminus, the 411-residue chain is Adenylosuccinate synthetase (411 aa).

Residues 11 to 17 and 39 to 41 each bind GTP; these read GDEGKGK and GHT. Asp12 acts as the Proton acceptor in catalysis. Residues Asp12 and Gly39 each contribute to the Mg(2+) site. Residues 12–15, 37–40, Thr121, Arg135, Gln215, Thr230, and Arg294 contribute to the IMP site; these read DEGK and NAGH. His40 serves as the catalytic Proton donor. A substrate-binding site is contributed by 290–296; it reads TTTKRPR. GTP is bound by residues Arg296, 322–324, and 400–402; these read KLD and STS.

This sequence belongs to the adenylosuccinate synthetase family. Homodimer. It depends on Mg(2+) as a cofactor.

The protein resides in the cytoplasm. The catalysed reaction is IMP + L-aspartate + GTP = N(6)-(1,2-dicarboxyethyl)-AMP + GDP + phosphate + 2 H(+). The protein operates within purine metabolism; AMP biosynthesis via de novo pathway; AMP from IMP: step 1/2. Plays an important role in the de novo pathway of purine nucleotide biosynthesis. Catalyzes the first committed step in the biosynthesis of AMP from IMP. This chain is Adenylosuccinate synthetase, found in Helicobacter pylori (strain HPAG1).